The sequence spans 418 residues: Tyrosine--tRNA ligase (418 aa).

The 'HIGH' region motif lies at 42-51; sequence PTAPDLHLGH. Positions 226 to 230 match the 'KMSKS' region motif; it reads KMSKS. Residue lysine 229 coordinates ATP. One can recognise an S4 RNA-binding domain in the interval 339 to 400; sequence VRLVALLTKS…GKRNFAKVRL (62 aa).

Belongs to the class-I aminoacyl-tRNA synthetase family. TyrS type 2 subfamily. In terms of assembly, homodimer.

The protein localises to the cytoplasm. It carries out the reaction tRNA(Tyr) + L-tyrosine + ATP = L-tyrosyl-tRNA(Tyr) + AMP + diphosphate + H(+). Its function is as follows. Catalyzes the attachment of tyrosine to tRNA(Tyr) in a two-step reaction: tyrosine is first activated by ATP to form Tyr-AMP and then transferred to the acceptor end of tRNA(Tyr). This chain is Tyrosine--tRNA ligase, found in Xylella fastidiosa (strain 9a5c).